A 197-amino-acid polypeptide reads, in one-letter code: Large ribosomal subunit protein uL5 (197 aa).

It belongs to the universal ribosomal protein uL5 family. As to quaternary structure, part of the 50S ribosomal subunit; contacts the 5S rRNA and probably tRNA. Forms a bridge to the 30S subunit in the 70S ribosome.

This is one of the proteins that bind and probably mediate the attachment of the 5S RNA into the large ribosomal subunit, where it forms part of the central protuberance. In the 70S ribosome it contacts protein S13 of the 30S subunit (bridge B1b), connecting the 2 subunits; this bridge is implicated in subunit movement. May contact the P site tRNA; the 5S rRNA and some of its associated proteins might help stabilize positioning of ribosome-bound tRNAs. This chain is Large ribosomal subunit protein uL5, found in Caldivirga maquilingensis (strain ATCC 700844 / DSM 13496 / JCM 10307 / IC-167).